Here is a 1054-residue protein sequence, read N- to C-terminus: SMC5-SMC6 complex localization factor protein 1 (1054 aa).

2 BRCT domains span residues 2–80 (EDSA…AKSG) and 121–199 (PGAF…LLEK). Positions 283–303 (RHGLENQKETKKKDKNIQRSY) are disordered. Over residues 284-299 (HGLENQKETKKKDKNI) the composition is skewed to basic and acidic residues. The tract at residues 407–1054 (PRGILNLIEN…MMCQSITELS (648 aa)) is NSE5-like domain; mediates interaction with SLF2. ANK repeat units lie at residues 802 to 832 (KGETALHRVCIKNQVEKLIILLSLPGIDINV), 836 to 865 (AGWTPLHEACNYGNTECVQEILQRCPEVDL), and 870 to 900 (DGVTPLHDALSNGHVEIGKLLLQRGGPELLQ).

Interacts (via BRCT domains) with RAD18 (via C-terminus and phosphorylated form); this interaction is required for efficient repair of UV-induced DNA damage. Interacts (via N-terminus) with SLF2; this interaction links RAD18 to the SMC5-SMC6 complex. Interacts (via BRCT domains) with RAD18; this interaction occurs in a SLF2-independent manner. Interacts with SMC6. Widely expressed. Expressed in testis. Expressed in spermatocytes.

It localises to the nucleus. The protein resides in the cytoplasm. Its subcellular location is the cytoskeleton. The protein localises to the microtubule organizing center. It is found in the centrosome. Functionally, plays a role in the DNA damage response (DDR) pathway by regulating postreplication repair of UV-damaged DNA and genomic stability maintenance. The SLF1-SLF2 complex acts to link RAD18 with the SMC5-SMC6 complex at replication-coupled interstrand cross-links (ICL) and DNA double-strand breaks (DSBs) sites on chromatin during DNA repair in response to stalled replication forks. Promotes the recruitment of SLF2 and the SMC5-SMC6 complex to DNA lesions. In Mus musculus (Mouse), this protein is SMC5-SMC6 complex localization factor protein 1.